Consider the following 576-residue polypeptide: V-type ATP synthase alpha chain (576 aa).

Residue 238–245 (GPFGAGKT) participates in ATP binding.

This sequence belongs to the ATPase alpha/beta chains family.

It carries out the reaction ATP + H2O + 4 H(+)(in) = ADP + phosphate + 5 H(+)(out). Produces ATP from ADP in the presence of a proton gradient across the membrane. The V-type alpha chain is a catalytic subunit. The protein is V-type ATP synthase alpha chain of Borrelia recurrentis (strain A1).